Here is a 185-residue protein sequence, read N- to C-terminus: Ribosome-recycling factor (185 aa).

This sequence belongs to the RRF family.

It localises to the cytoplasm. Functionally, responsible for the release of ribosomes from messenger RNA at the termination of protein biosynthesis. May increase the efficiency of translation by recycling ribosomes from one round of translation to another. This Desulfosudis oleivorans (strain DSM 6200 / JCM 39069 / Hxd3) (Desulfococcus oleovorans) protein is Ribosome-recycling factor.